The following is a 336-amino-acid chain: UPF0324 membrane protein BR0028/BS1330_I0028 (336 aa).

The next 11 helical transmembrane spans lie at 9 to 26 (ILPGLGLSVAITAAAMVL), 36 to 55 (RAWLEALVIAILLGTAVRSL), 68 to 90 (FSAKLLLEIAVALLGASISASAV), 94 to 116 (GSGLIFGIAAVVAVAITLSYGIG), 128 to 150 (LVACGNSICGNSAIAAMAPVIGA), 160 to 182 (AFTAILGVIVVLTLPLLVPLLGL), 189 to 211 (ILAGLTVYAVPQVLAATAPVSLL), 221 to 240 (LVRVLMLGPVILVFALISGN), 247 to 269 (PGFFQLVPWFIIGFLAMMALHSL), 279 to 301 (AIQYASMLLTIISMAALGLGVDI), and 313 to 335 (LTAILSLIALCCISLGLIHMLGV).

Belongs to the UPF0324 family.

It is found in the cell membrane. This chain is UPF0324 membrane protein BR0028/BS1330_I0028, found in Brucella suis biovar 1 (strain 1330).